The chain runs to 142 residues: Large ribosomal subunit protein bL17 (142 aa).

It belongs to the bacterial ribosomal protein bL17 family. Part of the 50S ribosomal subunit. Contacts protein L32.

The polypeptide is Large ribosomal subunit protein bL17 (Brucella abortus (strain S19)).